We begin with the raw amino-acid sequence, 73 residues long: MAKKEGALELEGTVVEALPNAMFRVELKNGHRVLATISGKMRQHYIRILPSDRVVVELSPYDLTRGRIVYRHK.

In terms of domain architecture, S1-like spans 1–73 (MAKKEGALEL…TRGRIVYRHK (73 aa)).

The protein belongs to the IF-1 family. As to quaternary structure, component of the 30S ribosomal translation pre-initiation complex which assembles on the 30S ribosome in the order IF-2 and IF-3, IF-1 and N-formylmethionyl-tRNA(fMet); mRNA recruitment can occur at any time during PIC assembly.

The protein localises to the cytoplasm. In terms of biological role, one of the essential components for the initiation of protein synthesis. Stabilizes the binding of IF-2 and IF-3 on the 30S subunit to which N-formylmethionyl-tRNA(fMet) subsequently binds. Helps modulate mRNA selection, yielding the 30S pre-initiation complex (PIC). Upon addition of the 50S ribosomal subunit IF-1, IF-2 and IF-3 are released leaving the mature 70S translation initiation complex. This Cutibacterium acnes (strain DSM 16379 / KPA171202) (Propionibacterium acnes) protein is Translation initiation factor IF-1.